The following is a 252-amino-acid chain: MITKRIIPCLDVKDGRVVKGVQFVSLRDAGDPVELARAYDEQGADELVFLDISASHEGRKTMVDVVRRVAAQLAIPFTVGGGISTLEDMKTILRAGADKVSVNTAALLRPELITEGANFFGSQCIVVAIDAKYDETMQSWRVYTHGGRRPTDWEVVAWAKEAVKRGAGEILLTSMDRDGGKDGFDLALTKRVSEAVSVPVIASGGAGCAQHFVDVFQTAQADAALAASIFHYQETSVQQVKQYVREQGVNVR.

Catalysis depends on residues D11 and D130.

It belongs to the HisA/HisF family. In terms of assembly, heterodimer of HisH and HisF.

Its subcellular location is the cytoplasm. It catalyses the reaction 5-[(5-phospho-1-deoxy-D-ribulos-1-ylimino)methylamino]-1-(5-phospho-beta-D-ribosyl)imidazole-4-carboxamide + L-glutamine = D-erythro-1-(imidazol-4-yl)glycerol 3-phosphate + 5-amino-1-(5-phospho-beta-D-ribosyl)imidazole-4-carboxamide + L-glutamate + H(+). It participates in amino-acid biosynthesis; L-histidine biosynthesis; L-histidine from 5-phospho-alpha-D-ribose 1-diphosphate: step 5/9. Functionally, IGPS catalyzes the conversion of PRFAR and glutamine to IGP, AICAR and glutamate. The HisF subunit catalyzes the cyclization activity that produces IGP and AICAR from PRFAR using the ammonia provided by the HisH subunit. The polypeptide is Imidazole glycerol phosphate synthase subunit HisF (Anoxybacillus flavithermus (strain DSM 21510 / WK1)).